Reading from the N-terminus, the 223-residue chain is Cytidylate kinase (223 aa).

10 to 18 contributes to the ATP binding site; sequence GPASSGKST.

This sequence belongs to the cytidylate kinase family. Type 1 subfamily.

It localises to the cytoplasm. It catalyses the reaction CMP + ATP = CDP + ADP. It carries out the reaction dCMP + ATP = dCDP + ADP. The chain is Cytidylate kinase from Streptococcus pneumoniae serotype 4 (strain ATCC BAA-334 / TIGR4).